We begin with the raw amino-acid sequence, 109 residues long: uncharacterized protein (109 aa).

A helical membrane pass occupies residues 26–48 (VTSIMTVSDINYLLLYLIILLTL).

It localises to the membrane. This is an uncharacterized protein from Saccharomyces cerevisiae (strain ATCC 204508 / S288c) (Baker's yeast).